We begin with the raw amino-acid sequence, 190 residues long: Nodulation protein L (190 aa).

Belongs to the transferase hexapeptide repeat family.

Acetyltransferase implicated in the O-acetylation of Nod factors. In Rhizobium leguminosarum bv. viciae, this protein is Nodulation protein L (nodL).